Consider the following 360-residue polypeptide: Lactosylceramide 4-alpha-galactosyltransferase (360 aa).

Topologically, residues Met-1–Arg-30 are cytoplasmic. Residues Val-31–Trp-51 traverse the membrane as a helical; Signal-anchor for type II membrane protein segment. The Lumenal segment spans residues His-52–Leu-360. The short motif at Asp-199–Asp-201 is the DXD motif element. N-linked (GlcNAc...) asparagine glycans are attached at residues Asn-210 and Asn-316.

The protein belongs to the glycosyltransferase 32 family. Ubiquitous. Highly expressed in kidney, mesenteric lymph node, spleen and brain.

It is found in the golgi apparatus membrane. The catalysed reaction is a beta-D-Gal-(1-&gt;4)-beta-D-Glc-(1&lt;-&gt;1)-Cer(d18:1(4E)) + UDP-alpha-D-galactose = a globoside Gb3Cer (d18:1(4E)) + UDP + H(+). It catalyses the reaction a beta-D-Gal-(1&lt;-&gt;1')-ceramide + UDP-alpha-D-galactose = alpha-D-Gal-(1-&gt;4)-beta-D-Gal-(1&lt;-&gt;1')-Cer + UDP + H(+). The protein operates within glycolipid biosynthesis. Catalyzes the transfer of galactose from UDP-alpha-D-galactose to lactosylceramide/beta-D-galactosyl-(1-&gt;4)-beta-D-glucosyl-(1&lt;-&gt;1)-ceramide(d18:1(4E)) to produce globotriaosylceramide/globoside Gb3Cer (d18:1(4E)). Also able to transfer galactose to galactosylceramide/beta-D-Gal-(1&lt;-&gt;1')-Cer. Globoside Gb3Cer is a glycosphingolipid of the globo serie, one of the major types of neutral root structures of glycosphingolipids, that constitute a significant portion of mammalian cell membranes. This is Lactosylceramide 4-alpha-galactosyltransferase from Rattus norvegicus (Rat).